The sequence spans 331 residues: tRNA-cytidine(32) 2-sulfurtransferase (331 aa).

Residues 1 to 33 are disordered; sequence MNAPHMNDTAADAATLDDAAAPAGRPALTRREQ. A compositionally biased stretch (low complexity) spans 8–23; sequence DTAADAATLDDAAAPA. The short motif at 71–76 is the PP-loop motif element; that stretch reads SGGKDS. 3 residues coordinate [4Fe-4S] cluster: C146, C149, and C237.

This sequence belongs to the TtcA family. Homodimer. Mg(2+) serves as cofactor. The cofactor is [4Fe-4S] cluster.

The protein resides in the cytoplasm. The enzyme catalyses cytidine(32) in tRNA + S-sulfanyl-L-cysteinyl-[cysteine desulfurase] + AH2 + ATP = 2-thiocytidine(32) in tRNA + L-cysteinyl-[cysteine desulfurase] + A + AMP + diphosphate + H(+). The protein operates within tRNA modification. Catalyzes the ATP-dependent 2-thiolation of cytidine in position 32 of tRNA, to form 2-thiocytidine (s(2)C32). The sulfur atoms are provided by the cysteine/cysteine desulfurase (IscS) system. This Burkholderia orbicola (strain MC0-3) protein is tRNA-cytidine(32) 2-sulfurtransferase.